Reading from the N-terminus, the 538-residue chain is Myeloid cell nuclear differentiation antigen-like protein (538 aa).

The region spanning 1 to 87 is the Pyrin domain; sequence MAEYKKIVLL…AKKLKTEKAK (87 aa). Residues 120–306 are disordered; sequence SYKSVPSSKK…PQPQNQNIPR (187 aa). Basic and acidic residues-rich tracts occupy residues 135 to 153 and 245 to 262; these read AKTE…DHLP and RREE…KEPD. The span at 276 to 305 shows a compositional bias: low complexity; it reads SPILHSSSSASSNIPSATNQKPQPQNQNIP. Positions 299–499 constitute an HIN-200 domain; that stretch reads PQNQNIPRGA…CGDHSFVKIK (201 aa).

The protein belongs to the HIN-200 family. Highest expression observed in spleen and thymus with moderate levels in bone marrow, lung, skin and heart, low levels in muscle, liver and intestine and little or no expression in brain and pancreas.

Its subcellular location is the nucleus. In terms of biological role, suppresses cell growth when expressed ectopically. The chain is Myeloid cell nuclear differentiation antigen-like protein from Mus musculus (Mouse).